The chain runs to 111 residues: Universal stress protein B (111 aa).

2 helical membrane-spanning segments follow: residues 1–21 and 90–110; these read MIST…NMAR and FILT…LLIW.

Belongs to the universal stress protein B family.

The protein localises to the cell inner membrane. This is Universal stress protein B from Enterobacter sp. (strain 638).